The sequence spans 228 residues: MQKLKQQVFEANMDLPRYGLVTFTWGNVSAIDRERGLVVIKPSGVAYETMKADDMVVVDMSGKVVEGKYRPSSDTATHLELYRRYPSLGGIVHTHSTHATAWAQAGLAIPALGTTHADYFFGDIPCTRGLSEEEVQGEYELNTGKVIIETLGDAEPLHTPGIVVYQHGPFAWGKDAHDAVHNAVVMEEVAKMAWIARSINPQLNHIDSFLMNKHFMRKHGPNAYYGQK.

Substrate contacts are provided by residues 26–27 (GN), 43–44 (SG), and 72–73 (SS). Positions 74, 93, and 95 each coordinate Zn(2+). Aspartate 118 functions as the Proton donor/acceptor in the catalytic mechanism. Residue histidine 167 coordinates Zn(2+). Residue tyrosine 225 is the Proton donor/acceptor of the active site.

Belongs to the aldolase class II family. AraD/FucA subfamily. It depends on Zn(2+) as a cofactor.

The catalysed reaction is L-ribulose 5-phosphate = D-xylulose 5-phosphate. It participates in cofactor degradation; L-ascorbate degradation; D-xylulose 5-phosphate from L-ascorbate: step 4/4. Its function is as follows. Catalyzes the isomerization of L-ribulose 5-phosphate to D-xylulose 5-phosphate. Is involved in the anaerobic L-ascorbate utilization. This chain is Putative L-ribulose-5-phosphate 4-epimerase UlaF, found in Shigella boydii serotype 4 (strain Sb227).